The primary structure comprises 156 residues: SsrA-binding protein (156 aa).

The tract at residues K130 to Y156 is disordered. Residues D132–Y156 are compositionally biased toward basic and acidic residues.

The protein belongs to the SmpB family.

The protein localises to the cytoplasm. Functionally, required for rescue of stalled ribosomes mediated by trans-translation. Binds to transfer-messenger RNA (tmRNA), required for stable association of tmRNA with ribosomes. tmRNA and SmpB together mimic tRNA shape, replacing the anticodon stem-loop with SmpB. tmRNA is encoded by the ssrA gene; the 2 termini fold to resemble tRNA(Ala) and it encodes a 'tag peptide', a short internal open reading frame. During trans-translation Ala-aminoacylated tmRNA acts like a tRNA, entering the A-site of stalled ribosomes, displacing the stalled mRNA. The ribosome then switches to translate the ORF on the tmRNA; the nascent peptide is terminated with the 'tag peptide' encoded by the tmRNA and targeted for degradation. The ribosome is freed to recommence translation, which seems to be the essential function of trans-translation. This is SsrA-binding protein from Exiguobacterium sibiricum (strain DSM 17290 / CCUG 55495 / CIP 109462 / JCM 13490 / 255-15).